A 579-amino-acid polypeptide reads, in one-letter code: Fatty-acid amide hydrolase 1 (579 aa).

The chain crosses the membrane as a helical span at residues 9-29; it reads AFSGPSGVALACCLVAAALAL. At 30-403 the chain is on the cytoplasmic side; the sequence is RWSSRRMARG…GDYVDSCLGD (374 aa). The active-site Charge relay system is the Lys142. Residues Met191, Ser217, and 238–241 each bind substrate; that span reads IGGS. Catalysis depends on Ser217, which acts as the Charge relay system. Catalysis depends on Ser241, which acts as the Acyl-ester intermediate. Residue Ser241 is modified to Phosphoserine. The stretch at 404 to 433 is an intramembrane region; it reads LISILRLPKWLKGLLAFMLRPLLPRLAGFL. The Cytoplasmic segment spans residues 434–579; it reads SSLRPRSAGK…RLMAPGRQPS (146 aa).

It belongs to the amidase family. Homodimer.

Its subcellular location is the endoplasmic reticulum membrane. It localises to the golgi apparatus membrane. The enzyme catalyses N-(5Z,8Z,11Z,14Z-eicosatetraenoyl)-ethanolamine + H2O = ethanolamine + (5Z,8Z,11Z,14Z)-eicosatetraenoate. The catalysed reaction is (9Z)-octadecenamide + H2O = (9Z)-octadecenoate + NH4(+). It carries out the reaction 2-(5Z,8Z,11Z,14Z-eicosatetraenoyl)-glycerol + H2O = glycerol + (5Z,8Z,11Z,14Z)-eicosatetraenoate + H(+). It catalyses the reaction 1-O-methyl-(5Z,8Z,11Z,14Z)-eicosatetraenoate + H2O = methanol + (5Z,8Z,11Z,14Z)-eicosatetraenoate + H(+). The enzyme catalyses (9Z,12Z,15Z)-octadecatrienamide + H2O = (9Z,12Z,15Z)-octadecatrienoate + NH4(+). The catalysed reaction is (5Z,8Z,11Z,14Z)-eicosatetraenamide + H2O = (5Z,8Z,11Z,14Z)-eicosatetraenoate + NH4(+). It carries out the reaction (6Z)-octadecenamide + H2O = (6Z)-octadecenoate + NH4(+). It catalyses the reaction (15Z)-tetracosenamide + H2O = (15Z)-tetracosenoate + NH4(+). The enzyme catalyses (8Z,11Z,14Z)-eicosatrienamide + H2O = (8Z,11Z,14Z)-eicosatrienoate + NH4(+). The catalysed reaction is (11Z,14Z,17Z)-eicosatrienamide + H2O = (11Z,14Z,17Z)-eicosatrienoate + NH4(+). It carries out the reaction (11Z,14Z)-eicosadienamide + H2O = (11Z,14Z)-eicosadienoate + NH4(+). It catalyses the reaction (9Z,12Z)-octadecadienamide + H2O = (9Z,12Z)-octadecadienoate + NH4(+). The enzyme catalyses tetradecamide + H2O = tetradecanoate + NH4(+). The catalysed reaction is N-(9Z-octadecenoyl) ethanolamine + H2O = ethanolamine + (9Z)-octadecenoate. It carries out the reaction N-(9Z-octadecenoyl)-taurine + H2O = taurine + (9Z)-octadecenoate. It catalyses the reaction (11Z)-eicosenamide + H2O = (11Z)-eicosenoate + NH4(+). The enzyme catalyses N-(9Z-hexadecenoyl) ethanolamine + H2O = (9Z)-hexadecenoate + ethanolamine. The catalysed reaction is N-octadecanoyl ethanolamine + H2O = octadecanoate + ethanolamine. It carries out the reaction N-docosanoyl-ethanolamine + H2O = docosanoate + ethanolamine. It catalyses the reaction N-tetracosanoyl-taurine + H2O = tetracosanoate + taurine. The enzyme catalyses N-(15Z-tetracosenoyl)-ethanolamine + H2O = (15Z)-tetracosenoate + ethanolamine. The catalysed reaction is N-docosanoyl-taurine + H2O = docosanoate + taurine. It carries out the reaction N-(15Z-tetracosenoyl)-taurine + H2O = (15Z)-tetracosenoate + taurine. It catalyses the reaction N-tricosanoyl-taurine + H2O = tricosanoate + taurine. The enzyme catalyses (9Z)-octadecenoate + glycine = N-(9Z-octadecenoyl)glycine + H2O. The catalysed reaction is N-(5Z,8Z,11Z,14Z)-eicosatetraenoyl-glycine + H2O = (5Z,8Z,11Z,14Z)-eicosatetraenoate + glycine. It carries out the reaction N-(5Z,8Z,11Z,14Z-eicosatetraenoyl)-L-serine + H2O = (5Z,8Z,11Z,14Z)-eicosatetraenoate + L-serine. With respect to regulation, inhibited by trifluoromethyl ketone. Functionally, catalyzes the hydrolysis of endogenous amidated lipids like the sleep-inducing lipid oleamide ((9Z)-octadecenamide), the endocannabinoid anandamide (N-(5Z,8Z,11Z,14Z-eicosatetraenoyl)-ethanolamine), as well as other fatty amides, to their corresponding fatty acids, thereby regulating the signaling functions of these molecules. Also catalyzes the hydrolysis of the endocannabinoid 2-arachidonoylglycerol (2-(5Z,8Z,11Z,14Z-eicosatetraenoyl)-glycerol). FAAH cooperates with PM20D1 in the hydrolysis of amino acid-conjugated fatty acids such as N-fatty acyl glycine and N-fatty acyl-L-serine, thereby acting as a physiological regulator of specific subsets of intracellular, but not of extracellular, N-fatty acyl amino acids. This chain is Fatty-acid amide hydrolase 1 (FAAH), found in Sus scrofa (Pig).